A 305-amino-acid polypeptide reads, in one-letter code: Elongation factor Ts (305 aa).

An involved in Mg(2+) ion dislocation from EF-Tu region spans residues threonine 79–valine 82.

Belongs to the EF-Ts family.

It is found in the cytoplasm. In terms of biological role, associates with the EF-Tu.GDP complex and induces the exchange of GDP to GTP. It remains bound to the aminoacyl-tRNA.EF-Tu.GTP complex up to the GTP hydrolysis stage on the ribosome. This is Elongation factor Ts from Brucella anthropi (strain ATCC 49188 / DSM 6882 / CCUG 24695 / JCM 21032 / LMG 3331 / NBRC 15819 / NCTC 12168 / Alc 37) (Ochrobactrum anthropi).